Consider the following 246-residue polypeptide: Nodulin-25 (246 aa).

An N-terminal signal peptide occupies residues 1–24; sequence MVYSNTYMLLGLGVFVLLSSHVLA.

The protein resides in the symbiosome. The protein localises to the peribacteroid space. In terms of biological role, involved in the development and function of nodules. It might participate in the biological process of symbiotic nitrogen fixation. This Medicago sativa (Alfalfa) protein is Nodulin-25 (NMS-25).